Here is a 194-residue protein sequence, read N- to C-terminus: Peptidyl-tRNA hydrolase (194 aa).

Y17 serves as a coordination point for tRNA. H22 (proton acceptor) is an active-site residue. Residues Y69, N71, and N117 each coordinate tRNA.

The protein belongs to the PTH family. Monomer.

The protein localises to the cytoplasm. The enzyme catalyses an N-acyl-L-alpha-aminoacyl-tRNA + H2O = an N-acyl-L-amino acid + a tRNA + H(+). In terms of biological role, hydrolyzes ribosome-free peptidyl-tRNAs (with 1 or more amino acids incorporated), which drop off the ribosome during protein synthesis, or as a result of ribosome stalling. Functionally, catalyzes the release of premature peptidyl moieties from peptidyl-tRNA molecules trapped in stalled 50S ribosomal subunits, and thus maintains levels of free tRNAs and 50S ribosomes. This is Peptidyl-tRNA hydrolase from Paenarthrobacter aurescens (strain TC1).